A 508-amino-acid polypeptide reads, in one-letter code: Photosystem II CP47 reaction center protein (508 aa).

The next 6 membrane-spanning stretches (helical) occupy residues 21 to 36 (SVHI…WAGS), 101 to 115 (IVFS…IWHW), 140 to 156 (GIHL…FGAF), 203 to 218 (IAAG…FHLS), 237 to 252 (VLSS…AFVV), and 457 to 472 (SFAL…HGAR).

The protein belongs to the PsbB/PsbC family. PsbB subfamily. PSII is composed of 1 copy each of membrane proteins PsbA, PsbB, PsbC, PsbD, PsbE, PsbF, PsbH, PsbI, PsbJ, PsbK, PsbL, PsbM, PsbT, PsbX, PsbY, PsbZ, Psb30/Ycf12, at least 3 peripheral proteins of the oxygen-evolving complex and a large number of cofactors. It forms dimeric complexes. The cofactor is Binds multiple chlorophylls. PSII binds additional chlorophylls, carotenoids and specific lipids..

It localises to the plastid. The protein resides in the chloroplast thylakoid membrane. Functionally, one of the components of the core complex of photosystem II (PSII). It binds chlorophyll and helps catalyze the primary light-induced photochemical processes of PSII. PSII is a light-driven water:plastoquinone oxidoreductase, using light energy to abstract electrons from H(2)O, generating O(2) and a proton gradient subsequently used for ATP formation. The chain is Photosystem II CP47 reaction center protein from Eucalyptus globulus subsp. globulus (Tasmanian blue gum).